Reading from the N-terminus, the 329-residue chain is DNA-directed RNA polymerase subunit alpha (329 aa).

Residues 1-234 (MQGSVTEFLR…EQLDAFVELR (234 aa)) form an alpha N-terminal domain (alpha-NTD) region. Positions 248–329 (FDPILLRPVD…WPPASLVDDL (82 aa)) are alpha C-terminal domain (alpha-CTD).

It belongs to the RNA polymerase alpha chain family. As to quaternary structure, homodimer. The RNAP catalytic core consists of 2 alpha, 1 beta, 1 beta' and 1 omega subunit. When a sigma factor is associated with the core the holoenzyme is formed, which can initiate transcription.

The enzyme catalyses RNA(n) + a ribonucleoside 5'-triphosphate = RNA(n+1) + diphosphate. In terms of biological role, DNA-dependent RNA polymerase catalyzes the transcription of DNA into RNA using the four ribonucleoside triphosphates as substrates. This Shewanella violacea (strain JCM 10179 / CIP 106290 / LMG 19151 / DSS12) protein is DNA-directed RNA polymerase subunit alpha.